Reading from the N-terminus, the 217-residue chain is tRNA (guanine-N(7)-)-methyltransferase (217 aa).

Glu44, Asp69, Asp96, and Asp118 together coordinate S-adenosyl-L-methionine. The active site involves Asp118. Residue Lys122 participates in substrate binding. An interaction with RNA region spans residues 124-129 (RHEKRR). Residues Asp154 and 193 to 196 (TEYE) each bind substrate.

The protein belongs to the class I-like SAM-binding methyltransferase superfamily. TrmB family.

The catalysed reaction is guanosine(46) in tRNA + S-adenosyl-L-methionine = N(7)-methylguanosine(46) in tRNA + S-adenosyl-L-homocysteine. The protein operates within tRNA modification; N(7)-methylguanine-tRNA biosynthesis. Catalyzes the formation of N(7)-methylguanine at position 46 (m7G46) in tRNA. The sequence is that of tRNA (guanine-N(7)-)-methyltransferase from Lactococcus lactis subsp. cremoris (strain SK11).